Reading from the N-terminus, the 617-residue chain is Secretogranin-2 (617 aa).

Residues 1–27 (MAEAKTHWLGAALSLIPLIFLISGAEA) form the signal peptide. The propeptide occupies 28 to 30 (ASF). Residues 123 to 147 (NEPQSVPKENKPHALNSEKNFPIDM) are disordered. Position 151 is a sulfotyrosine (Y151). S174, S268, S432, S532, S555, and S556 each carry phosphoserine. A disordered region spans residues 552-583 (NQGSSQETDKLAPVSKRFPVGPPKNDDTPNRQ).

It belongs to the chromogranin/secretogranin protein family. As to quaternary structure, interacts with Secretogranin III/SCG3.

It localises to the secreted. Its function is as follows. Neuroendocrine protein of the granin family that regulates the biogenesis of secretory granules. The polypeptide is Secretogranin-2 (SCG2) (Macaca fascicularis (Crab-eating macaque)).